Reading from the N-terminus, the 463-residue chain is L-seryl-tRNA(Sec) selenium transferase (463 aa).

Lys-295 bears the N6-(pyridoxal phosphate)lysine mark.

Belongs to the SelA family. Homodecamer; pentamer of dimers. Binds only one seryl-tRNA(Sec) per dimer. Pyridoxal 5'-phosphate is required as a cofactor.

Its subcellular location is the cytoplasm. The enzyme catalyses L-seryl-tRNA(Sec) + selenophosphate + H(+) = L-selenocysteinyl-tRNA(Sec) + phosphate. Its pathway is aminoacyl-tRNA biosynthesis; selenocysteinyl-tRNA(Sec) biosynthesis; selenocysteinyl-tRNA(Sec) from L-seryl-tRNA(Sec) (bacterial route): step 1/1. In terms of biological role, converts seryl-tRNA(Sec) to selenocysteinyl-tRNA(Sec) required for selenoprotein biosynthesis. This is L-seryl-tRNA(Sec) selenium transferase from Salmonella dublin (strain CT_02021853).